Reading from the N-terminus, the 138-residue chain is Small ribosomal subunit protein uS11c (138 aa).

Residues methionine 1 to valine 22 form a disordered region. Residues glycine 9–valine 22 show a composition bias toward basic residues.

It belongs to the universal ribosomal protein uS11 family. In terms of assembly, part of the 30S ribosomal subunit.

The protein localises to the plastid. It is found in the chloroplast. This Draba nemorosa (Woodland whitlowgrass) protein is Small ribosomal subunit protein uS11c.